The primary structure comprises 475 residues: Aspartyl/glutamyl-tRNA(Asn/Gln) amidotransferase subunit B (475 aa).

The protein belongs to the GatB/GatE family. GatB subfamily. As to quaternary structure, heterotrimer of A, B and C subunits.

The catalysed reaction is L-glutamyl-tRNA(Gln) + L-glutamine + ATP + H2O = L-glutaminyl-tRNA(Gln) + L-glutamate + ADP + phosphate + H(+). The enzyme catalyses L-aspartyl-tRNA(Asn) + L-glutamine + ATP + H2O = L-asparaginyl-tRNA(Asn) + L-glutamate + ADP + phosphate + 2 H(+). Allows the formation of correctly charged Asn-tRNA(Asn) or Gln-tRNA(Gln) through the transamidation of misacylated Asp-tRNA(Asn) or Glu-tRNA(Gln) in organisms which lack either or both of asparaginyl-tRNA or glutaminyl-tRNA synthetases. The reaction takes place in the presence of glutamine and ATP through an activated phospho-Asp-tRNA(Asn) or phospho-Glu-tRNA(Gln). The chain is Aspartyl/glutamyl-tRNA(Asn/Gln) amidotransferase subunit B from Bacillus cereus (strain ZK / E33L).